The chain runs to 178 residues: Epididymal-specific lipocalin-9 (178 aa).

An N-terminal signal peptide occupies residues 1–16 (MVLLLVLGLVLSLATA). N46, N68, and N129 each carry an N-linked (GlcNAc...) asparagine glycan. An intrachain disulfide couples C83 to C176.

Belongs to the calycin superfamily. Lipocalin family. As to expression, expressed in epididymis. Not detected in all other tissues tested.

It localises to the secreted. This Mus musculus (Mouse) protein is Epididymal-specific lipocalin-9 (Lcn9).